A 229-amino-acid polypeptide reads, in one-letter code: Large ribosomal subunit protein uL1 (229 aa).

It belongs to the universal ribosomal protein uL1 family. As to quaternary structure, part of the 50S ribosomal subunit.

Binds directly to 23S rRNA. The L1 stalk is quite mobile in the ribosome, and is involved in E site tRNA release. In terms of biological role, protein L1 is also a translational repressor protein, it controls the translation of the L11 operon by binding to its mRNA. The polypeptide is Large ribosomal subunit protein uL1 (Streptococcus pneumoniae (strain Taiwan19F-14)).